Reading from the N-terminus, the 1371-residue chain is DNA-directed RNA polymerase subunit beta (1371 aa).

Belongs to the RNA polymerase beta chain family. In terms of assembly, the RNAP catalytic core consists of 2 alpha, 1 beta, 1 beta' and 1 omega subunit. When a sigma factor is associated with the core the holoenzyme is formed, which can initiate transcription.

It carries out the reaction RNA(n) + a ribonucleoside 5'-triphosphate = RNA(n+1) + diphosphate. Its function is as follows. DNA-dependent RNA polymerase catalyzes the transcription of DNA into RNA using the four ribonucleoside triphosphates as substrates. The polypeptide is DNA-directed RNA polymerase subunit beta (Geobacter sp. (strain M21)).